A 179-amino-acid chain; its full sequence is ATP synthase subunit b (179 aa).

A helical membrane pass occupies residues 13–33 (IHIDELVFGLIAFAVIFALVY).

The protein belongs to the ATPase B chain family. In terms of assembly, F-type ATPases have 2 components, F(1) - the catalytic core - and F(0) - the membrane proton channel. F(1) has five subunits: alpha(3), beta(3), gamma(1), delta(1), epsilon(1). F(0) has three main subunits: a(1), b(2) and c(10-14). The alpha and beta chains form an alternating ring which encloses part of the gamma chain. F(1) is attached to F(0) by a central stalk formed by the gamma and epsilon chains, while a peripheral stalk is formed by the delta and b chains.

It is found in the cell membrane. In terms of biological role, f(1)F(0) ATP synthase produces ATP from ADP in the presence of a proton or sodium gradient. F-type ATPases consist of two structural domains, F(1) containing the extramembraneous catalytic core and F(0) containing the membrane proton channel, linked together by a central stalk and a peripheral stalk. During catalysis, ATP synthesis in the catalytic domain of F(1) is coupled via a rotary mechanism of the central stalk subunits to proton translocation. Component of the F(0) channel, it forms part of the peripheral stalk, linking F(1) to F(0). The sequence is that of ATP synthase subunit b from Thermobifida fusca (strain YX).